A 288-amino-acid chain; its full sequence is Phosphatidylserine decarboxylase proenzyme (288 aa).

Catalysis depends on charge relay system; for autoendoproteolytic cleavage activity residues aspartate 92, histidine 149, and serine 254. The active-site Schiff-base intermediate with substrate; via pyruvic acid; for decarboxylase activity is the serine 254. The residue at position 254 (serine 254) is a Pyruvic acid (Ser); by autocatalysis.

The protein belongs to the phosphatidylserine decarboxylase family. PSD-B subfamily. Prokaryotic type I sub-subfamily. In terms of assembly, heterodimer of a large membrane-associated beta subunit and a small pyruvoyl-containing alpha subunit. Pyruvate serves as cofactor. Is synthesized initially as an inactive proenzyme. Formation of the active enzyme involves a self-maturation process in which the active site pyruvoyl group is generated from an internal serine residue via an autocatalytic post-translational modification. Two non-identical subunits are generated from the proenzyme in this reaction, and the pyruvate is formed at the N-terminus of the alpha chain, which is derived from the carboxyl end of the proenzyme. The autoendoproteolytic cleavage occurs by a canonical serine protease mechanism, in which the side chain hydroxyl group of the serine supplies its oxygen atom to form the C-terminus of the beta chain, while the remainder of the serine residue undergoes an oxidative deamination to produce ammonia and the pyruvoyl prosthetic group on the alpha chain. During this reaction, the Ser that is part of the protease active site of the proenzyme becomes the pyruvoyl prosthetic group, which constitutes an essential element of the active site of the mature decarboxylase.

It is found in the cell membrane. It carries out the reaction a 1,2-diacyl-sn-glycero-3-phospho-L-serine + H(+) = a 1,2-diacyl-sn-glycero-3-phosphoethanolamine + CO2. It participates in phospholipid metabolism; phosphatidylethanolamine biosynthesis; phosphatidylethanolamine from CDP-diacylglycerol: step 2/2. Its function is as follows. Catalyzes the formation of phosphatidylethanolamine (PtdEtn) from phosphatidylserine (PtdSer). In Bordetella petrii (strain ATCC BAA-461 / DSM 12804 / CCUG 43448), this protein is Phosphatidylserine decarboxylase proenzyme.